Here is a 440-residue protein sequence, read N- to C-terminus: General transcription factor IIE subunit 1 (440 aa).

An N-acetylalanine modification is found at A2. The HTH TFE/IIEalpha-type domain occupies 14–104; sequence LKRLAKYVIR…NYRTLVNVVK (91 aa). An N6-acetyllysine modification is found at K67. Zn(2+) is bound by residues C129, C132, C154, and C157. A C4-type zinc finger spans residues 129–157; that stretch reads CPVCCSTFTDLEANQLFDPMTGTFRCTFC. Phosphoserine is present on S268. Residues 333–353 show a composition bias toward low complexity; that stretch reads SSVTAGSVGAAAPVTAANGSD. The tract at residues 333–395 is disordered; that stretch reads SSVTAGSVGA…EEFEEVADDP (63 aa). Composition is skewed to acidic residues over residues 354 to 364 and 381 to 393; these read SESETSESDDD and EDEE…EVAD.

This sequence belongs to the TFIIE alpha subunit family. Tetramer of two alpha and two beta chains. Interacts with TAF6/TAFII80. Interacts with ATF7IP. Interacts with SND1. Part of TBP-based Pol II pre-initiation complex (PIC), in which Pol II core assembles with general transcription factors and other specific initiation factors including GTF2E1, GTF2E2, GTF2F1, GTF2F2, TCEA1, ERCC2, ERCC3, GTF2H2, GTF2H3, GTF2H4, GTF2H5, GTF2A1, GTF2A2, GTF2B and TBP; this large multi-subunit PIC complex mediates DNA unwinding and targets Pol II core to the transcription start site where the first phosphodiester bond forms.

It localises to the nucleus. Recruits TFIIH to the initiation complex and stimulates the RNA polymerase II C-terminal domain kinase and DNA-dependent ATPase activities of TFIIH. Both TFIIH and TFIIE are required for promoter clearance by RNA polymerase. This is General transcription factor IIE subunit 1 (Gtf2e1) from Mus musculus (Mouse).